We begin with the raw amino-acid sequence, 832 residues long: Protein P (832 aa).

Residues 1–177 are terminal protein domain (TP); the sequence is MPLSYQHFRR…FCGSPYSWEQ (177 aa). The tract at residues 178–335 is spacer; it reads ELQHGAESFH…YCLSHIVNLL (158 aa). Positions 241–263 are disordered; sequence RRPFGVEPSGSGHTTNLASKSAS. Positions 251–263 are enriched in polar residues; sequence SGHTTNLASKSAS. A polymerase/reverse transcriptase domain (RT) region spans residues 336-679; it reads EDWGPCAEHG…YLNLYPVARQ (344 aa). A Reverse transcriptase domain is found at 346 to 589; the sequence is EHHIRIPRTP…YSLHFMGYVI (244 aa). Mg(2+) is bound by residues D418, D540, and D541.

It belongs to the hepadnaviridae P protein family.

The enzyme catalyses DNA(n) + a 2'-deoxyribonucleoside 5'-triphosphate = DNA(n+1) + diphosphate. It catalyses the reaction Endonucleolytic cleavage to 5'-phosphomonoester.. Activated by host HSP70 and HSP40 in vitro to be able to bind the epsilon loop of the pgRNA. Because deletion of the RNase H region renders the protein partly chaperone-independent, the chaperones may be needed indirectly to relieve occlusion of the RNA-binding site by this domain. Inhibited by several reverse-transcriptase inhibitors: Lamivudine, Adefovir and Entecavir. Its function is as follows. Multifunctional enzyme that converts the viral RNA genome into dsDNA in viral cytoplasmic capsids. This enzyme displays a DNA polymerase activity that can copy either DNA or RNA templates, and a ribonuclease H (RNase H) activity that cleaves the RNA strand of RNA-DNA heteroduplexes in a partially processive 3'- to 5'-endonucleasic mode. Neo-synthesized pregenomic RNA (pgRNA) are encapsidated together with the P protein, and reverse-transcribed inside the nucleocapsid. Initiation of reverse-transcription occurs first by binding the epsilon loop on the pgRNA genome, and is initiated by protein priming, thereby the 5'-end of (-)DNA is covalently linked to P protein. Partial (+)DNA is synthesized from the (-)DNA template and generates the relaxed circular DNA (RC-DNA) genome. After budding and infection, the RC-DNA migrates in the nucleus, and is converted into a plasmid-like covalently closed circular DNA (cccDNA). The activity of P protein does not seem to be necessary for cccDNA generation, and is presumably released from (+)DNA by host nuclear DNA repair machinery. The polypeptide is Protein P (Homo sapiens (Human)).